A 143-amino-acid polypeptide reads, in one-letter code: Transcriptional regulator MraZ (143 aa).

2 consecutive SpoVT-AbrB domains span residues 5–47 (TYAP…SQRE) and 76–119 (ASAE…DAEA).

Belongs to the MraZ family. As to quaternary structure, forms oligomers.

The protein localises to the cytoplasm. It is found in the nucleoid. This Leifsonia xyli subsp. xyli (strain CTCB07) protein is Transcriptional regulator MraZ.